Here is a 589-residue protein sequence, read N- to C-terminus: Arginine--tRNA ligase (589 aa).

The short motif at 132-142 is the 'HIGH' region element; the sequence is PNTNKPLHVGH.

This sequence belongs to the class-I aminoacyl-tRNA synthetase family. In terms of assembly, monomer.

Its subcellular location is the cytoplasm. The catalysed reaction is tRNA(Arg) + L-arginine + ATP = L-arginyl-tRNA(Arg) + AMP + diphosphate. This Treponema pallidum subsp. pallidum (strain SS14) protein is Arginine--tRNA ligase.